Reading from the N-terminus, the 340-residue chain is Outer membrane protein B (340 aa).

An N-terminal signal peptide occupies residues 1-26 (MSSKLVNYLRLTFLSFLGIASTSLDA).

It belongs to the chlamydial OMP family.

The protein resides in the cell outer membrane. This is Outer membrane protein B (ompB) from Chlamydia trachomatis serovar D (strain ATCC VR-885 / DSM 19411 / UW-3/Cx).